Reading from the N-terminus, the 306-residue chain is Protein-methionine-sulfoxide reductase catalytic subunit MsrP (306 aa).

The tat-type signal signal peptide spans Met-1–Ala-44. Residues Asn-69, Tyr-72 to Glu-73, Cys-127, Thr-162, Asn-210, Arg-215, and Gly-226 to Lys-228 contribute to the Mo-molybdopterin site.

It belongs to the MsrP family. As to quaternary structure, heterodimer of a catalytic subunit (MsrP) and a heme-binding subunit (MsrQ). It depends on Mo-molybdopterin as a cofactor. Post-translationally, predicted to be exported by the Tat system. The position of the signal peptide cleavage has not been experimentally proven.

It is found in the periplasm. It catalyses the reaction L-methionyl-[protein] + a quinone + H2O = L-methionyl-(S)-S-oxide-[protein] + a quinol. The catalysed reaction is L-methionyl-[protein] + a quinone + H2O = L-methionyl-(R)-S-oxide-[protein] + a quinol. Part of the MsrPQ system that repairs oxidized periplasmic proteins containing methionine sulfoxide residues (Met-O), using respiratory chain electrons. Thus protects these proteins from oxidative-stress damage caused by reactive species of oxygen and chlorine generated by the host defense mechanisms. MsrPQ is essential for the maintenance of envelope integrity under bleach stress, rescuing a wide series of structurally unrelated periplasmic proteins from methionine oxidation. The catalytic subunit MsrP is non-stereospecific, being able to reduce both (R-) and (S-) diastereoisomers of methionine sulfoxide. This chain is Protein-methionine-sulfoxide reductase catalytic subunit MsrP, found in Caulobacter sp. (strain K31).